The following is a 353-amino-acid chain: Putative transport protein aq_740 (353 aa).

The next 8 membrane-spanning stretches (helical) occupy residues 4 to 24 (LSLF…LYLL), 28 to 48 (FNPI…YGFI), 60 to 80 (FLVI…FAVI), 156 to 176 (VYTA…LFFI), 209 to 229 (VLAV…MGFI), 240 to 260 (LIWA…AAFV), 268 to 288 (LFTT…TFLI), and 309 to 329 (VALF…GVFL).

Belongs to the autoinducer-2 exporter (AI-2E) (TC 2.A.86) family.

It is found in the cell membrane. In Aquifex aeolicus (strain VF5), this protein is Putative transport protein aq_740.